Here is a 256-residue protein sequence, read N- to C-terminus: 5'-nucleotidase SurE (256 aa).

A divalent metal cation contacts are provided by Asp-8, Asp-9, Ser-40, and Asn-92.

This sequence belongs to the SurE nucleotidase family. Requires a divalent metal cation as cofactor.

The protein localises to the cytoplasm. It catalyses the reaction a ribonucleoside 5'-phosphate + H2O = a ribonucleoside + phosphate. Functionally, nucleotidase that shows phosphatase activity on nucleoside 5'-monophosphates. This chain is 5'-nucleotidase SurE, found in Allorhizobium ampelinum (strain ATCC BAA-846 / DSM 112012 / S4) (Agrobacterium vitis (strain S4)).